Consider the following 581-residue polypeptide: MTVTYSSQVANARLGSFSRLLLCWRGSIYKLLYGEFLIFLLCYYIIRFIYRMALTDEQQVIFEKLTLYCDSYIQLIPISFVLGFYVTLVVTRWWNQYENLPWPDRLMNLVSCFVEGKDEQGRLLRRTLMRYANLGNVLILRSISAAVYKRFPSPQHLVKAGFMTPSEHKHLEKLSLPHNSFWMPWVWFANLSTKAWIGGRIRDPVLLQSLLDEMNTLRTQCGHLYAYDWISVPLVYTQVVTVAVYSFFLACLVGRQFLNPAKAYPGHEMDLVVPLFTFLQFFFYAGWLKVAEQLINPFGEDDDDFETNWIVDRSLQVSLLAVDEMHQDLPPMERDMYWNDPEPHPPYTAASAQSRRPSFFGSTFNISLGKEDMEFQPEEEEEAHTGILGHFLGLQSSDHQPPRTNSKTKLLWPKKEGHFHEGHPKNLRGARLDSSDQEDSKAWREGGFKSAALCGRPGYHSAPQTPLGHTPMVFPPEESAPLGLRRVSGIDEAAKDQSLQPATPSIKKSFELLPESAEASAEPLQGSHVRRKTVEFNLADLSEAPEHLKEPNLEPPMGIHAIIKDHRDPYWALENRDEAHS.

Residues 1 to 31 are Cytoplasmic-facing; that stretch reads MTVTYSSQVANARLGSFSRLLLCWRGSIYKL. A Ca(2+)-binding site is contributed by Ala-10. A helical membrane pass occupies residues 32–51; the sequence is LYGEFLIFLLCYYIIRFIYR. Residues 52 to 60 lie on the Extracellular side of the membrane; the sequence is MALTDEQQV. The chain crosses the membrane as a helical span at residues 61–82; sequence IFEKLTLYCDSYIQLIPISFVL. Residues 83–237 lie on the Cytoplasmic side of the membrane; the sequence is GFYVTLVVTR…DWISVPLVYT (155 aa). The helical transmembrane segment at 238–255 threads the bilayer; it reads QVVTVAVYSFFLACLVGR. The Extracellular segment spans residues 256–274; it reads QFLNPAKAYPGHEMDLVVP. The chain crosses the membrane as a helical span at residues 275 to 288; the sequence is LFTFLQFFFYAGWL. Residues 289–581 are Cytoplasmic-facing; that stretch reads KVAEQLINPF…ALENRDEAHS (293 aa). 4 residues coordinate Ca(2+): Gln-293, Asn-296, Asp-301, and Asp-304. A disordered region spans residues 416–440; the sequence is EGHFHEGHPKNLRGARLDSSDQEDS.

The protein belongs to the anion channel-forming bestrophin (TC 1.A.46) family. Calcium-sensitive chloride channel subfamily. In terms of assembly, interacts with YWHAG; this interaction promotes the ligand-gated L-glutamate channel activity leading to the positive regulation of NMDA glutamate receptor activity through the L-glutamate secretion. Post-translationally, phosphorylated (in vitro). Dephosphorylated (in vitro) by PP2A.

It is found in the cell membrane. The protein localises to the basolateral cell membrane. It carries out the reaction chloride(in) = chloride(out). The catalysed reaction is hydrogencarbonate(in) = hydrogencarbonate(out). The enzyme catalyses 4-aminobutanoate(in) = 4-aminobutanoate(out). It catalyses the reaction L-glutamate(out) = L-glutamate(in). Functionally, ligand-gated anion channel that allows the movement of anions across cell membranes when activated by calcium (Ca2+). Allows the movement of chloride and hydrogencarbonate. Found in a partially open conformation leading to significantly smaller chloride movement. Upon F2R/PAR-1 activation, the sequestered calcium is released into the cytosol of astrocytes, leading to the (Ca2+)-dependent release of L-glutamate into the synaptic cleft that targets the neuronal postsynaptic GRIN2A/NMDAR receptor resulting in the synaptic plasticity regulation. Upon activation of the norepinephrine-alpha-1 adrenergic receptor signaling pathway, transports as well D-serine than L-glutamate in a (Ca2+)-dependent manner, leading to activation of adjacent NMDAR receptors and therefore regulates the heterosynaptic long-term depression and metaplasticity during initial memory acquisition. Releases the 4-aminobutanoate neurotransmitter in a (Ca2+)-dependent manner, and participates in its tonic release from cerebellar glial cells. This Sus scrofa (Pig) protein is Bestrophin-1.